Here is a 1273-residue protein sequence, read N- to C-terminus: DNA polymerase 037L (1273 aa).

Residues 679–837 (IRKNAITEEL…ENKSKEDIDE (159 aa)) adopt a coiled-coil conformation.

It belongs to the DNA polymerase type-B family.

It carries out the reaction DNA(n) + a 2'-deoxyribonucleoside 5'-triphosphate = DNA(n+1) + diphosphate. Its function is as follows. DNA-directed DNA polymerase involved in viral DNA replication. This is DNA polymerase 037L (DPOL) from Invertebrate iridescent virus 6 (IIV-6).